Consider the following 242-residue polypeptide: Transcription factor bHLH100 (242 aa).

The 53-residue stretch at 61–113 (MKKLNHNASERERRKKINTMFSSLRSCLPPTNQTKKLSVSATVSQALKYIPEL) folds into the bHLH domain.

Homodimer. As to expression, expressed constitutively in roots, leaves, and stems.

The protein localises to the nucleus. Its function is as follows. Plays a role in metal homeostasis. Confers tolerance to high zinc (Zn) and nickel (Ni). The chain is Transcription factor bHLH100 (BHLH100) from Arabidopsis thaliana (Mouse-ear cress).